Reading from the N-terminus, the 181-residue chain is Small ribosomal subunit protein bS16 (181 aa).

Residues 150–181 (KKAAEEAAKAAAEAPAEEAAPAEETATEAAAE) form a disordered region. A compositionally biased stretch (low complexity) spans 158–181 (KAAAEAPAEEAAPAEETATEAAAE).

The protein belongs to the bacterial ribosomal protein bS16 family.

In Bacteroides fragilis (strain YCH46), this protein is Small ribosomal subunit protein bS16.